The primary structure comprises 464 residues: 17,18-epoxy-17-hydroxycur-19-ene N-malonyltransferase (464 aa).

Active-site proton acceptor residues include histidine 191 and aspartate 403.

Belongs to the plant acyltransferase family. In terms of assembly, monomer. Mainly expressed in roots.

It is found in the cytoplasm. It catalyses the reaction 17,18-epoxy-17-hydroxycur-19-ene + malonyl-CoA = prestrychnine + CoA. It functions in the pathway alkaloid biosynthesis. In terms of biological role, malonylransferase involved in the biosynthesis of curare monoterpene indole alkaloids (MIAs), natural products such as strychnine, a neurotoxic compound used as a pesticide to control rodents, and its pharmacologically active derivatives, including brucine, used to regulate blood pressure. Curare alkaloids act as animal glycine receptor antagonists. Catalyzes the conversion of 17,18-epoxy-17-hydroxycur-19-ene (Wieland-Gumlich aldehyde) to prestrychnine, which is spontaneously converted into strychnine and isostrychnine. The polypeptide is 17,18-epoxy-17-hydroxycur-19-ene N-malonyltransferase (Strychnos nux-vomica (Poison nut)).